The chain runs to 117 residues: Transcription elongation factor A protein-like 8 (117 aa).

A disordered region spans residues 1-81 (MQKSCDENEG…PEEVIRGVDE (81 aa)). The segment covering 41–81 (NVREETDGSLRGEPAEPSPEPKEDTPARHLNPEEVIRGVDE) has biased composition (basic and acidic residues). A coiled-coil region spans residues 73-100 (EEVIRGVDELERLREEIRRVRNKFVLMH).

This sequence belongs to the TFS-II family. TFA subfamily. As to expression, highly expressed in kidney. Moderately expressed in heart and lung. Low expression in brain and liver. Expression is up-regulated in nephrectomized kidney.

The protein localises to the nucleus. Functionally, may be involved in transcriptional regulation. This chain is Transcription elongation factor A protein-like 8 (Tceal8), found in Rattus norvegicus (Rat).